Consider the following 62-residue polypeptide: Large ribosomal subunit protein uL30 (62 aa).

It belongs to the universal ribosomal protein uL30 family. As to quaternary structure, part of the 50S ribosomal subunit.

This Marinobacter nauticus (strain ATCC 700491 / DSM 11845 / VT8) (Marinobacter aquaeolei) protein is Large ribosomal subunit protein uL30.